Consider the following 429-residue polypeptide: Cyclin-B2-1 (429 aa).

It belongs to the cyclin family. Cyclin AB subfamily. In terms of assembly, interacts with CDC20-1 and CDC20-2. As to expression, expressed in roots, stems, leaves, flowers and siliques.

The protein is Cyclin-B2-1 (CYCB2-1) of Arabidopsis thaliana (Mouse-ear cress).